Reading from the N-terminus, the 421-residue chain is 4-methylaminobutanoate oxidase (methylamine-forming) (421 aa).

FAD is bound by residues E31, R33, R39, and E379.

It belongs to the flavin monoamine oxidase family. In terms of assembly, monomer. FAD is required as a cofactor.

The enzyme catalyses 4-(methylamino)butanoate + O2 + H2O = succinate semialdehyde + methylamine + H2O2. The protein operates within alkaloid degradation; nicotine degradation. Its function is as follows. Catalyzes the removal of methylamine from 4-methylaminobutanoate with the formation of succinate semialdehyde. Is involved in the catabolism of 4-methylaminobutanoate produced from nicotine. Has a very weak monoamine oxidase activity with 4-aminobutanoate. Cannot use spermidine, spermine, sarcosine, dimethylglycine, glycine, choline, betaine, alpha-methylamino isobutyrate, methylamine propionitrile and methylamino propylamine as substrate. The chain is 4-methylaminobutanoate oxidase (methylamine-forming) (mao) from Paenarthrobacter nicotinovorans (Arthrobacter nicotinovorans).